Consider the following 1189-residue polypeptide: Disabled homolog 2-interacting protein (1189 aa).

The interval 1–75 (MSAGGNARKS…EPSASTPFRV (75 aa)) is disordered. Positions 20–38 (LLRRPRLQRQRSRSRSRTR) are enriched in basic residues. A compositionally biased stretch (basic and acidic residues) spans 39–49 (PARESPQERPG). Residues 59-73 (SEKNPSMEPSASTPF) show a composition bias toward polar residues. The PH domain maps to 101 to 202 (SFRHILPGFR…WMENLRRAVH (102 aa)). Positions 193 to 311 (WMENLRRAVH…AGRQFVEKWY (119 aa)) constitute a C2 domain. The Ras-GAP domain maps to 387 to 595 (GKVKDFLTDL…TNMQRFLLEI (209 aa)). Positions 646 to 943 (LRDVHTALST…RTPPTLLSTL (298 aa)) are necessary for interaction with AKT1. The segment covering 653–668 (LSTPGSGQLPGTNDLA) has biased composition (polar residues). 2 disordered regions span residues 653–679 (LSTPGSGQLPGTNDLASTPGSGSSSVS) and 715–738 (RSSGVQPSPARSSSYSEANEPDLQ). Positions 669-679 (STPGSGSSSVS) are enriched in low complexity. A compositionally biased stretch (polar residues) spans 715–731 (RSSGVQPSPARSSSYSE). Ser728 carries the post-translational modification Phosphoserine; by MAP3K5 and RIPK1. Ser747 carries the post-translational modification Phosphoserine. Disordered regions lie at residues 804 to 823 (VPTPTTPGTSEGAPGRPQLL), 843 to 865 (PRGLGDSGSEGHSSLSSHSNSEE), 895 to 998 (SLTE…SPNA), 1015 to 1034 (EDEGLGPDPPHRDRLRSKEE), and 1163 to 1189 (ARNGVSPTNPTKLQITENGEFRNSSNC). Positions 852–865 (EGHSSLSSHSNSEE) are enriched in low complexity. Pro residues predominate over residues 919–931 (QPPPPPPPPPPAP). 2 stretches are compositionally biased toward polar residues: residues 939 to 955 (LLSTLQYPRPSSGTLAS) and 967 to 976 (LRQQSSSSKG). A phosphoserine mark is found at Ser978 and Ser995. Basic and acidic residues predominate over residues 1023–1034 (PPHRDRLRSKEE). Residues 1025–1159 (HRDRLRSKEE…SALTQLKERY (135 aa)) are a coiled coil.

In terms of assembly, on plasma membrane, exists in an inactive form complexed with TNFR1; in response to TNF-alpha, dissociates from TNFR1 complex, translocates to cytoplasm and forms part of an intracellular signaling complex comprising TRADD, RIPK1, TRAF2 and MAP3K5. Interacts with DAB1. Part of a cytoplasmic complex made of HIPK1, DAB2IP and MAP3K5 in response to TNF-alpha; this complex formation promotes MAP3K5-JNK activation and subsequent apoptosis. Interacts (via N-terminal domain) with JAK2; the interaction occurs in a IFNG/IFN-gamma-dependent manner and inhibits JAK2 autophosphorylation activity. Interacts (via C2 domain) with GSK3B; the interaction stimulates GSK3B kinase activation. Interacts (via C2 domain) with PPP2CA. Interacts (via proline-rich motif) with a regulatory p85 subunit (via SH3 domain) of the PI3K complex; the interaction inhibits the PI3K-AKT complex activity in a TNF-alpha-dependent manner in prostate cancer (PCa) cells. Interacts with AKT1; the interaction is increased in a TNF-alpha-induced manner. Interacts (via C2 domain and active form preferentially) with KDR/VEGFR2 (tyrosine-phosphorylated active form preferentially); the interaction occurs at the late phase of VEGFA response and inhibits KDR/VEGFR2 activity. Interacts (via N-terminus C2 domain) with MAP3K5 ('Ser-966' dephosphorylated form preferentially); the interaction occurs in a TNF-alpha-induced manner. Interacts (via Ras-GAP domain) with the catalytic subunit of protein phosphatase PP2A; the interaction occurs in resting endothelial cells, is further enhanced by TNF-alpha stimulation and is required to bridge PP2A to MAP3K5. Interacts (via C-terminus PER domain) with TRAF2 (via zinc fingers); the interaction occurs in a TNF-alpha-dependent manner. Interacts with 14-3-3 proteins; the interaction occurs in a TNF-alpha-dependent manner. Interacts (via Ras-GAP domain) with RIPK1 (via kinase domain); the interaction occurs in a TNF-alpha-dependent manner. Interacts (via PH domain) with ERN1. Interacts with TRAF2. Interacts (via NPXY motif) with DAB2 (via PID domain). Interacts with RAB40C; acts as a GAP for RAB40C. In response to TNF-alpha-induction, phosphorylated at Ser-728; phosphorylation leads to a conformational change, and thus, increases its association with 14-3-3 proteins, MAP3K5, RIPK1 and TRAF2 in endothelial cells; also stimulates regulatory p85 subunit sequestring and PI3K-p85 complex activity inhibition. In terms of tissue distribution, expressed in vascular endothelium of muscle and aorta, in smooth muscle cells of aorta and epithelial cells of lung. Expressed throughout the brain, including olfactory bulb, hypothalamus, cerebellum and cerebral cortex. Expressed in the soma and processes of neurons in a variety of brain structures, including the developing cerebral cortex, CA1 pyramidal neurons and Purkinje cells. Poorly expressed in medulloblastoma cells compared to cerebellar precursor proliferating progenitor cells (at protein level). Highly expressed in the brain, salivary gland, and testis; moderate expression in kidney and heart. Low expression in the lung, seminal vesicle, ventral prostate, epididymis, liver, and bladder. Very low expression in the coagulation gland and skeleton muscles. Lowest expression seen in spleen.

The protein localises to the cytoplasm. The protein resides in the cell membrane. It is found in the membrane. Its subcellular location is the cell projection. It localises to the dendrite. Functions as a scaffold protein implicated in the regulation of a large spectrum of both general and specialized signaling pathways. Involved in several processes such as innate immune response, inflammation and cell growth inhibition, apoptosis, cell survival, angiogenesis, cell migration and maturation. Also plays a role in cell cycle checkpoint control; reduces G1 phase cyclin levels resulting in G0/G1 cell cycle arrest. Mediates signal transduction by receptor-mediated inflammatory signals, such as the tumor necrosis factor (TNF), interferon (IFN) or lipopolysaccharide (LPS). Modulates the balance between phosphatidylinositol 3-kinase (PI3K)-AKT-mediated cell survival and apoptosis stimulated kinase (MAP3K5)-JNK signaling pathways; sequesters both AKT1 and MAP3K5 and counterbalances the activity of each kinase by modulating their phosphorylation status in response to pro-inflammatory stimuli. Acts as a regulator of the endoplasmic reticulum (ER) unfolded protein response (UPR) pathway; specifically involved in transduction of the ER stress-response to the JNK cascade through ERN1. Mediates TNF-alpha-induced apoptosis activation by facilitating dissociation of inhibitor 14-3-3 from MAP3K5; recruits the PP2A phosphatase complex which dephosphorylates MAP3K5 on 'Ser-966', leading to the dissociation of 13-3-3 proteins and activation of the MAP3K5-JNK signaling pathway in endothelial cells. Also mediates TNF/TRAF2-induced MAP3K5-JNK activation, while it inhibits CHUK-NF-kappa-B signaling. Acts a negative regulator in the IFN-gamma-mediated JAK-STAT signaling cascade by inhibiting smooth muscle cell (VSMCs) proliferation and intimal expansion, and thus, prevents graft arteriosclerosis (GA). Acts as a GTPase-activating protein (GAP) for the ADP ribosylation factor 6 (ARF6) and Ras. Promotes hydrolysis of the ARF6-bound GTP and thus, negatively regulates phosphatidylinositol 4,5-bisphosphate (PIP2)-dependent TLR4-TIRAP-MyD88 and NF-kappa-B signaling pathways in endothelial cells in response to lipopolysaccharides (LPS). Binds specifically to phosphatidylinositol 4-phosphate (PtdIns4P) and phosphatidylinositol 3-phosphate (PtdIns3P). In response to vascular endothelial growth factor (VEGFA), acts as a negative regulator of the VEGFR2-PI3K-mediated angiogenic signaling pathway by inhibiting endothelial cell migration and tube formation. In the developing brain, promotes both the transition from the multipolar to the bipolar stage and the radial migration of cortical neurons from the ventricular zone toward the superficial layer of the neocortex in a glial-dependent locomotion process. Probable downstream effector of the Reelin signaling pathway; promotes Purkinje cell (PC) dendrites development and formation of cerebellar synapses. Also functions as a tumor suppressor protein in prostate cancer progression; prevents cell proliferation and epithelial-to-mesenchymal transition (EMT) through activation of the glycogen synthase kinase-3 beta (GSK3B)-induced beta-catenin and inhibition of PI3K-AKT and Ras-MAPK survival downstream signaling cascades, respectively. In Mus musculus (Mouse), this protein is Disabled homolog 2-interacting protein (Dab2ip).